Reading from the N-terminus, the 446-residue chain is Signal recognition particle protein (446 aa).

Residues 108–115 (GLQGAGKT), 191–195 (DTAGR), and 249–252 (TKLD) contribute to the GTP site.

It belongs to the GTP-binding SRP family. SRP54 subfamily. As to quaternary structure, part of the signal recognition particle protein translocation system, which is composed of SRP and FtsY. Interacts with a small cytoplasmic RNA (sc-RNA).

Its subcellular location is the cytoplasm. It catalyses the reaction GTP + H2O = GDP + phosphate + H(+). Functionally, involved in targeting and insertion of nascent membrane proteins into the cytoplasmic membrane. Binds to the hydrophobic signal sequence of the ribosome-nascent chain (RNC) as it emerges from the ribosomes. The SRP-RNC complex is then targeted to the cytoplasmic membrane where it interacts with the SRP receptor FtsY. Interaction with FtsY leads to the transfer of the RNC complex to the Sec translocase for insertion into the membrane, the hydrolysis of GTP by both Ffh and FtsY, and the dissociation of the SRP-FtsY complex into the individual components. This chain is Signal recognition particle protein, found in Bacillus subtilis (strain 168).